The sequence spans 311 residues: Aspartate carbamoyltransferase catalytic subunit (311 aa).

Carbamoyl phosphate-binding residues include Arg58 and Thr59. Residue Lys86 participates in L-aspartate binding. Carbamoyl phosphate contacts are provided by Arg108, His136, and Gln139. Arg169 and Arg223 together coordinate L-aspartate. Carbamoyl phosphate contacts are provided by Gly264 and Pro265.

The protein belongs to the aspartate/ornithine carbamoyltransferase superfamily. ATCase family. Heterododecamer (2C3:3R2) of six catalytic PyrB chains organized as two trimers (C3), and six regulatory PyrI chains organized as three dimers (R2).

It carries out the reaction carbamoyl phosphate + L-aspartate = N-carbamoyl-L-aspartate + phosphate + H(+). It participates in pyrimidine metabolism; UMP biosynthesis via de novo pathway; (S)-dihydroorotate from bicarbonate: step 2/3. Its function is as follows. Catalyzes the condensation of carbamoyl phosphate and aspartate to form carbamoyl aspartate and inorganic phosphate, the committed step in the de novo pyrimidine nucleotide biosynthesis pathway. The chain is Aspartate carbamoyltransferase catalytic subunit from Ruegeria pomeroyi (strain ATCC 700808 / DSM 15171 / DSS-3) (Silicibacter pomeroyi).